The primary structure comprises 393 residues: Dual specificity mitogen-activated protein kinase kinase 1 (393 aa).

A disordered region spans residues 1 to 27 (MPKKKPTPIQLNPAPDGSAVNGTSSAE). In terms of domain architecture, Protein kinase spans 68–361 (FEKISELGAG…LKQLMVHAFI (294 aa)). Residues 74 to 82 (LGAGNGGVV) and Lys-97 each bind ATP. The Proton acceptor role is filled by Asp-190. Ser-218 and Ser-222 each carry phosphoserine; by RAF. Residues 270-307 (ELELLFGCHVEGDAAETPPRPRTPGRPLSSYGMDSRPP) form an RAF1-binding region. Residue Thr-286 is modified to Phosphothreonine. At Thr-292 the chain carries Phosphothreonine; by MAPK1. Ser-298 bears the Phosphoserine; by PAK mark.

It belongs to the protein kinase superfamily. STE Ser/Thr protein kinase family. MAP kinase kinase subfamily. In terms of assembly, found in a complex with at least BRAF, HRAS, MAP2K1, MAPK3/ERK1 and RGS14. Forms a heterodimer with MAP2K2/MEK2. Forms heterodimers with KSR2 which further dimerize to form tetramers. Interacts with KSR1 or KSR2 and BRAF; the interaction with KSR1 or KSR2 mediates KSR1-BRAF or KSR2-BRAF dimerization. Interacts with ARBB2, LAMTOR3, MAPK1/ERK2 and RAF1. Interacts with MAPK1/ERK2. Interacts with MORG1. Interacts with PPARG. Interacts with SGK1. Interacts with BIRC6/bruce. Interacts with KAT7; the interaction promotes KAT7 phosphorylation. Interacts with RAF1 and NEK10; the interaction is required for ERK1/2-signaling pathway activation in response to UV irradiation. Interacts with TRAF3IP3. Interacts with MOS. Post-translationally, phosphorylation at Ser-218 and Ser-222 by MAP kinase kinase kinases (BRAF or MEKK1) positively regulates kinase activity. Also phosphorylated at Thr-292 by MAPK1/ERK2 and at Ser-298 by PAK. MAPK1/ERK2 phosphorylation of Thr-292 occurs in response to cellular adhesion and leads to inhibition of Ser-298 phosphorylation by PAK. Autophosphorylated at Ser-218 and Ser-222, autophosphosphorylation is promoted by NEK10 following UV irradiation.

It localises to the cytoplasm. The protein localises to the cytoskeleton. Its subcellular location is the microtubule organizing center. It is found in the centrosome. The protein resides in the spindle pole body. It localises to the nucleus. The protein localises to the membrane. The catalysed reaction is L-seryl-[protein] + ATP = O-phospho-L-seryl-[protein] + ADP + H(+). It catalyses the reaction L-threonyl-[protein] + ATP = O-phospho-L-threonyl-[protein] + ADP + H(+). The enzyme catalyses L-tyrosyl-[protein] + ATP = O-phospho-L-tyrosyl-[protein] + ADP + H(+). Ras proteins such as HRAS mediate the activation of RAF proteins such as RAF1 or BRAF which in turn activate extracellular signal-regulated kinases (ERK) through MAPK (mitogen-activated protein kinases) and ERK kinases MAP2K1/MEK1 and MAP2K2/MEK2. Activation occurs through phosphorylation of Ser-218 and Ser-222. MAP2K1/MEK1 binds KSR1 or KSR2 releasing the inhibitory intramolecular interaction between KSR1 or KSR2 protein kinase and N-terminal domains. This allows KSR1 or KSR2 dimerization with BRAF leading to BRAF activation and phosphorylation of MAP2K1. MAP2K1/MEK1 is also the target of negative feed-back regulation by its substrate kinases, such as MAPK1/ERK2. These phosphorylate MAP2K1/MEK1 on Thr-292, thereby facilitating dephosphorylation of the activating residues Ser-218 and Ser-222. Inhibited by serine/threonine phosphatase 2A. Functionally, dual specificity protein kinase which acts as an essential component of the MAP kinase signal transduction pathway. Binding of extracellular ligands such as growth factors, cytokines and hormones to their cell-surface receptors activates RAS and this initiates RAF1 activation. RAF1 then further activates the dual-specificity protein kinases MAP2K1/MEK1 and MAP2K2/MEK2. Both MAP2K1/MEK1 and MAP2K2/MEK2 function specifically in the MAPK/ERK cascade, and catalyze the concomitant phosphorylation of a threonine and a tyrosine residue in a Thr-Glu-Tyr sequence located in the extracellular signal-regulated kinases MAPK3/ERK1 and MAPK1/ERK2, leading to their activation and further transduction of the signal within the MAPK/ERK cascade. Activates BRAF in a KSR1 or KSR2-dependent manner; by binding to KSR1 or KSR2 releases the inhibitory intramolecular interaction between KSR1 or KSR2 protein kinase and N-terminal domains which promotes KSR1 or KSR2-BRAF dimerization and BRAF activation. Depending on the cellular context, this pathway mediates diverse biological functions such as cell growth, adhesion, survival and differentiation, predominantly through the regulation of transcription, metabolism and cytoskeletal rearrangements. One target of the MAPK/ERK cascade is peroxisome proliferator-activated receptor gamma (PPARG), a nuclear receptor that promotes differentiation and apoptosis. MAP2K1/MEK1 has been shown to export PPARG from the nucleus. The MAPK/ERK cascade is also involved in the regulation of endosomal dynamics, including lysosome processing and endosome cycling through the perinuclear recycling compartment (PNRC), as well as in the fragmentation of the Golgi apparatus during mitosis. The protein is Dual specificity mitogen-activated protein kinase kinase 1 (Map2k1) of Mus musculus (Mouse).